The following is a 75-amino-acid chain: UPF0352 protein VIBHAR_03027 (75 aa).

This sequence belongs to the UPF0352 family.

This Vibrio campbellii (strain ATCC BAA-1116) protein is UPF0352 protein VIBHAR_03027.